Consider the following 2034-residue polypeptide: Sperm vesicle fusion protein fer-1 (2034 aa).

The disordered stretch occupies residues 1 to 80 (MTVKEKLLKV…GGSDIELLPD (80 aa)). Over 1 to 1998 (MTVKEKLLKV…CIKYFWHYYG (1998 aa)) the chain is Cytoplasmic. The span at 66-79 (ELSDDGGSDIELLP) shows a compositional bias: acidic residues. C2 domains are found at residues 229–367 (RIDE…YLPT), 954–1082 (DSED…PQWF), 1120–1246 (YKER…KSDH), and 1363–1484 (KKGK…ATGG). Residues 1563–1619 (QKAGKENFSDGSDQQNEDVSDGSWDEEDLEREKEKLKWEKHRSKGKPLKKVTTEKAE) are disordered. Over residues 1577–1591 (QNEDVSDGSWDEEDL) the composition is skewed to acidic residues. Residues 1600 to 1611 (WEKHRSKGKPLK) show a composition bias toward basic residues. Positions 1684–1831 (EYGAIPAPFN…EGIGSPSDVG (148 aa)) constitute a C2 5 domain. The interval 1953–1972 (QEPAGKKRSEPNHSPFLEKP) is disordered. The chain crosses the membrane as a helical span at residues 1999–2019 (LQILLWLIIIVILILTIFVLL). At 2020-2034 (HTWPTILAEIIKAIF) the chain is on the extracellular side.

The protein belongs to the ferlin family. Exclusively expressed in the testis.

It is found in the membrane. Its function is as follows. Required for the fusion of the membranous organelles (MOs) with the plasma membrane, a process essential in spermiogenesis. This chain is Sperm vesicle fusion protein fer-1 (fer-1), found in Caenorhabditis elegans.